The chain runs to 394 residues: ATP phosphoribosyltransferase regulatory subunit (394 aa).

The protein belongs to the class-II aminoacyl-tRNA synthetase family. HisZ subfamily. Heteromultimer composed of HisG and HisZ subunits.

The protein localises to the cytoplasm. It participates in amino-acid biosynthesis; L-histidine biosynthesis; L-histidine from 5-phospho-alpha-D-ribose 1-diphosphate: step 1/9. Required for the first step of histidine biosynthesis. May allow the feedback regulation of ATP phosphoribosyltransferase activity by histidine. In Pseudomonas aeruginosa (strain LESB58), this protein is ATP phosphoribosyltransferase regulatory subunit.